The chain runs to 442 residues: Cell division protein FtsZ (442 aa).

GTP contacts are provided by residues 18–22 (GGGVN), 105–107 (GTG), E136, R140, and D184. The span at 329-341 (AAPAAEPVQQQVP) shows a compositional bias: low complexity. The segment at 329 to 442 (AAPAAEPVQQ…DDLDVPSFLQ (114 aa)) is disordered. 2 stretches are compositionally biased toward basic and acidic residues: residues 349 to 362 (PEKE…REEN) and 390 to 431 (NDRD…RDDR).

Belongs to the FtsZ family. In terms of assembly, homodimer. Polymerizes to form a dynamic ring structure in a strictly GTP-dependent manner. Interacts directly with several other division proteins.

It is found in the cytoplasm. Functionally, essential cell division protein that forms a contractile ring structure (Z ring) at the future cell division site. The regulation of the ring assembly controls the timing and the location of cell division. One of the functions of the FtsZ ring is to recruit other cell division proteins to the septum to produce a new cell wall between the dividing cells. Binds GTP and shows GTPase activity. The sequence is that of Cell division protein FtsZ from Corynebacterium glutamicum (strain ATCC 13032 / DSM 20300 / JCM 1318 / BCRC 11384 / CCUG 27702 / LMG 3730 / NBRC 12168 / NCIMB 10025 / NRRL B-2784 / 534).